The primary structure comprises 82 residues: uncharacterized protein (82 aa).

This is an uncharacterized protein from Ictalurid herpesvirus 1 (strain Auburn) (IcHV-1).